The primary structure comprises 225 residues: Red fluorescent protein drFP583 (225 aa).

Residues Gln66 to Gly68 constitute a cross-link (2-iminomethyl-5-imidazolinone (Gln-Gly)). Residue Tyr67 is modified to (Z)-2,3-didehydrotyrosine.

It belongs to the GFP family. In terms of assembly, homotetramer. In terms of processing, contains a chromophore consisting of modified amino acid residues. The chromophore is formed by autocatalytic backbone condensation between Xaa-N and Gly-(N+2), oxidation of Tyr-(N+1) to didehydrotyrosine, and formation of a double bond to the alpha-amino nitrogen of residue Xaa-N. Maturation of the chromophore requires nothing other than molecular oxygen.

Thought to play a role in photoprotection of the coral's resident symbiont microalgae's photosystems from photoinhibition caused by high light levels found near the surface of coral reefs. In deeper water, the fluorescence may be to convert blue light into longer wavelengths more suitable for use in photosynthesis by the microalgal symbionts. The chain is Red fluorescent protein drFP583 from Discosoma sp. (Sea anemone).